The primary structure comprises 625 residues: DELLA protein SLR1 (625 aa).

The tract at residues 1–34 (MKREYQEAGGSSGGGSSADMGSCKDKVMAGAAGE) is disordered. Residues 39 to 43 (DELLA) carry the DELLA motif motif. The interval 167 to 209 (TADPSAADSARDTKRMRTGGGSTSSSSSSSSSLGGGASRGSVV) is disordered. Residues 189–198 (TSSSSSSSSS) show a composition bias toward low complexity. In terms of domain architecture, GRAS spans 232-621 (VDTQEAGIRL…RPLIATSAWR (390 aa)). The tract at residues 239-294 (IRLVHALLACAEAVQQENFAAAEALVKQIPTLAASQGGAMRKVAAYFGEALARRVY) is leucine repeat I (LRI). The tract at residues 241 to 278 (LVHALLACAEAVQQENFAAAEALVKQIPTLAASQGGAM) is required for possible homodimerization. The LxCxE motif signature appears at 246–250 (LACAE). Residues 313 to 378 (HAHFYESCPY…GGPPSFRLTG (66 aa)) are VHIID. A VHIID motif is present at residues 344-348 (VHVVD). Residues 392–431 (QVGWKLAQFAHTIRVDFQYRGLVAATLADLEPFMLQPEGE) are leucine repeat II (LRII). The interval 441 to 542 (IAVNSVFELH…EVYLGRQICN (102 aa)) is PFYRE. The short motif at 449-453 (LHRLL) is the LXXLL motif element. The SAW stretch occupies residues 545–621 (ACEGAERTER…RPLIATSAWR (77 aa)).

The protein belongs to the GRAS family. DELLA subfamily. In terms of assembly, may be a homodimer. Interacts directly with the GID2 component of the SCF(GID2) complex. Interacts with GID1 in a GA-dependent manner, probably leading to its interaction with GID2 and its subsequent degradation. Interacts with D14 and GID1 in an strigolactone-dependent manner. Interacts with HD16/EL1. In terms of processing, phosphorylated on Ser/Thr residues in the N-terminal part. Both phosphorylated and unphosphorylated forms are degraded upon GA treatment, suggesting that phosphorylation does not trigger ubiquitination. Phosphorylated by HD16/EL1. Phosphorylation enhances its stability. Ubiquitinated. Upon GA application it is ubiquitinated by the SCF(GID2) complex, leading to its subsequent degradation. As to expression, expressed in nodes, internodes, leaf sheats of young seedlings and ears of adult plants. Weakly expressed in leaf blade and root.

The protein resides in the nucleus. In terms of biological role, probable transcriptional regulator that acts as a repressor of the gibberellin (GA) signaling pathway. Probably acts by participating in large multiprotein complexes that repress transcription of GA-inducible genes. Upon GA application, it is degraded by the proteasome, allowing the GA signaling pathway. In contrast, its overexpression prevents the GA signaling pathway and induces a dwarf phenotype. This is DELLA protein SLR1 from Oryza sativa subsp. japonica (Rice).